The following is a 423-amino-acid chain: Enolase (423 aa).

Q164 is a (2R)-2-phosphoglycerate binding site. Catalysis depends on E206, which acts as the Proton donor. Residues D243, E289, and D316 each coordinate Mg(2+). (2R)-2-phosphoglycerate contacts are provided by K341, R370, S371, and K392. K341 (proton acceptor) is an active-site residue.

This sequence belongs to the enolase family. Mg(2+) is required as a cofactor.

The protein localises to the cytoplasm. It localises to the secreted. It is found in the cell surface. It carries out the reaction (2R)-2-phosphoglycerate = phosphoenolpyruvate + H2O. It functions in the pathway carbohydrate degradation; glycolysis; pyruvate from D-glyceraldehyde 3-phosphate: step 4/5. In terms of biological role, catalyzes the reversible conversion of 2-phosphoglycerate (2-PG) into phosphoenolpyruvate (PEP). It is essential for the degradation of carbohydrates via glycolysis. The polypeptide is Enolase (Desulfotalea psychrophila (strain LSv54 / DSM 12343)).